Consider the following 78-residue polypeptide: Large ribosomal subunit protein bL28 (78 aa).

The protein belongs to the bacterial ribosomal protein bL28 family.

The chain is Large ribosomal subunit protein bL28 from Pseudoalteromonas atlantica (strain T6c / ATCC BAA-1087).